A 1615-amino-acid chain; its full sequence is MSMSQSALIKEEISSVSFQFYTSDDVRKLSVKQIVEIESFDMLGGPVPGGLHDPALGPTGPAERCATCSLDFIECPGHFGHIELAIPCYNPVSFQTIFKLLKNKCFHCHHFKHGKPIINQFIEELTLLFKGDVVKARNLRERNVLLRGYEEKKKGKSNEEGEEVMESDESDSDKMDTDENKTNGKIICDGVFNAKEIYSGKATHIEDFKREVFKEFFGSFSGYAIPCGNCGAYSPRLRNGDASKSKLFIMPLHDKYATKNSAIKLPTNFSSVKEQTEHGTWFAPWEVLDNMKKLFENEKEILDMLLGHLVPIVTNKGGAKKNVGRQFTKESNVDSLFMRVFPVTPARYRPPNFVNGRRSEHPQNSHYKGMVKSNKMIRQSIDAGEGKAKFLVNSVCDLQMHVNNMYDNSKSNSNTNEVANGIKQILEKKEGLFRKHMMGKRVNYAARTVISPDISLETNEMGVPQYFAKTLTFPQPVTSFNYNQLAQAVINGPEQYPGANFIEDENGHLINLSKESQEKRIALSKTLLTSHPHAPRGVNKKVYRHLLSGDYVLANRQPTLHKPGIMGHRVKVLGKNEKTLRMHYSNCSTYNADFDGDEMNIHFPQSLLASAEIREICANNYQYLVPRNGAPLRGLIQDHILTGVLLTKRDTLFTKADFQAILYASCWSVNTKHPIVTPPPCILKPVPLWSGKQLISAALNQLTIGRAPLNLEAPSKIPTKMWGTKGLEITRDSHVIIRQNEMVAGILDKGHFGASSYGLVHTCYELYDPDVAGSLLTLLGRMFTNYLQSRGFTCGVDDLLMKNKEEKFRVETLKKANEEGYTVAAKFADLSKYDEQKARDFFSKALQSEREVARLDGLLKKGLNQYTSKVIDTLIPGGQQKPFPKNNFSLMTVSGAKGSVVNFSQVSCLLGQQELEGKRVPRMVSGKTLPSFQAYDASARAGGFVMDRFLTGVRPQDYFFHCMAGREGLIDTAVKTSRSGYLQRCLIKHLEGLSVQYDNTVRESDGSVIQFNYGEDSLEIGKTPYLTKFPIIAENYELFKSQFPMEQLIEQLKNQEVVEYNRSIKTQPELDPVMSKFNPSSDLGCVSESFMNQLNHYIESNPQKLIKTTSNRDGKINEKDFRNLMYLYYSRSMVSPGESVGLLCAQSIGEPSTQMTLNTFHLAGRGEANVTLGIPRLRELIMTATTKPITPLMEFQINDSTNKVETEKMAKYLEILKLSDIIKDITVQEYFQDTNRNYDIEIEFIPTLQQVLSLHRIKEKQLNKLFGEFNKVIKRQVKSQGKLKVNNGDIGLGSKVRGSDLVEDDSLTINDDDAPANDDTTNNDENTSQQQPSSQNKKSKSKVITQDDDSVAAKSKNKKKQNVNYEDGEEEAEEKDSDEGESEAEESDDKSDVDSDSDEISNSRSSNSFSDESIEFDQKKLTFTISVASDSKKVLMLGIVETEASKFVLKSCKGITRCFVNEKQVGGKTHYSIQSEGVNLSEIFELRDKLKIDEIYTNDIYAILQKYGVEACRQAVTSEISNVFAAYGISVDKRHLILLGDYMTFEGGYRALNRIGIENNTSPFQKMSFETTFSFLSKASLMGDYDTVTSPSSRIVLGQIVKNGTGSFTIVAPVK.

Positions 65, 68, 75, and 78 each coordinate Zn(2+). The tract at residues 155-181 (GKSNEEGEEVMESDESDSDKMDTDENK) is disordered. The span at 160–171 (EGEEVMESDESD) shows a compositional bias: acidic residues. The segment covering 172–181 (SDKMDTDENK) has biased composition (basic and acidic residues). Residues aspartate 593, aspartate 595, and aspartate 597 each contribute to the Mg(2+) site. The interval 955 to 967 (PQDYFFHCMAGRE) is bridging helix. Positions 1305 to 1316 (DSLTINDDDAPA) are enriched in acidic residues. Residues 1305–1411 (DSLTINDDDA…NSRSSNSFSD (107 aa)) form a disordered region. The segment covering 1317–1336 (NDDTTNNDENTSQQQPSSQN) has biased composition (low complexity). The span at 1366–1399 (EDGEEEAEEKDSDEGESEAEESDDKSDVDSDSDE) shows a compositional bias: acidic residues. Residues 1400–1411 (ISNSRSSNSFSD) show a composition bias toward low complexity.

The protein belongs to the RNA polymerase beta' chain family. In terms of assembly, component of the RNA polymerase I (Pol I) complex consisting of at least 13 subunits.

The protein resides in the nucleus. The enzyme catalyses RNA(n) + a ribonucleoside 5'-triphosphate = RNA(n+1) + diphosphate. In terms of biological role, DNA-dependent RNA polymerase catalyzes the transcription of DNA into RNA using the four ribonucleoside triphosphates as substrates. Largest and catalytic core component of RNA polymerase I which synthesizes ribosomal RNA precursors. Forms the polymerase active center together with the second largest subunit. A single stranded DNA template strand of the promoter is positioned within the central active site cleft of Pol I. A bridging helix emanates from RPA1 and crosses the cleft near the catalytic site and is thought to promote translocation of Pol I by acting as a ratchet that moves the RNA-DNA hybrid through the active site by switching from straight to bent conformations at each step of nucleotide addition. The chain is DNA-directed RNA polymerase I subunit rpa1 (polr1a) from Dictyostelium discoideum (Social amoeba).